Consider the following 596-residue polypeptide: Capsid protein VP1 (596 aa).

Belongs to the microviridae F protein family.

It localises to the virion. The protein localises to the host cytoplasm. Assembles to form an icosahedral capsid with a T=1 symmetry. The chain is Capsid protein VP1 from Chlamydia phage 1 (Bacteriophage Chp1).